The primary structure comprises 455 residues: Bifunctional protein GlmU (455 aa).

Positions 1 to 228 (MTQPLHVIIL…AQEAEGANDP (228 aa)) are pyrophosphorylase. Residues 10 to 13 (LAAG), K24, Q76, 81 to 82 (GT), 103 to 105 (YGD), G138, E153, N168, and N226 each bind UDP-N-acetyl-alpha-D-glucosamine. D105 provides a ligand contact to Mg(2+). N226 is a Mg(2+) binding site. A linker region spans residues 229–249 (WQLSQLERAWQRRAVRALCAQ). Residues 250–455 (GARVRDPARL…DGWKRPLKKS (206 aa)) are N-acetyltransferase. Residues R332 and K350 each contribute to the UDP-N-acetyl-alpha-D-glucosamine site. Residue H362 is the Proton acceptor of the active site. Y365 and N376 together coordinate UDP-N-acetyl-alpha-D-glucosamine. Acetyl-CoA contacts are provided by residues A379, 385 to 386 (NY), S404, A422, and R439.

It in the N-terminal section; belongs to the N-acetylglucosamine-1-phosphate uridyltransferase family. The protein in the C-terminal section; belongs to the transferase hexapeptide repeat family. In terms of assembly, homotrimer. The cofactor is Mg(2+).

The protein resides in the cytoplasm. The enzyme catalyses alpha-D-glucosamine 1-phosphate + acetyl-CoA = N-acetyl-alpha-D-glucosamine 1-phosphate + CoA + H(+). It carries out the reaction N-acetyl-alpha-D-glucosamine 1-phosphate + UTP + H(+) = UDP-N-acetyl-alpha-D-glucosamine + diphosphate. It functions in the pathway nucleotide-sugar biosynthesis; UDP-N-acetyl-alpha-D-glucosamine biosynthesis; N-acetyl-alpha-D-glucosamine 1-phosphate from alpha-D-glucosamine 6-phosphate (route II): step 2/2. It participates in nucleotide-sugar biosynthesis; UDP-N-acetyl-alpha-D-glucosamine biosynthesis; UDP-N-acetyl-alpha-D-glucosamine from N-acetyl-alpha-D-glucosamine 1-phosphate: step 1/1. The protein operates within bacterial outer membrane biogenesis; LPS lipid A biosynthesis. Catalyzes the last two sequential reactions in the de novo biosynthetic pathway for UDP-N-acetylglucosamine (UDP-GlcNAc). The C-terminal domain catalyzes the transfer of acetyl group from acetyl coenzyme A to glucosamine-1-phosphate (GlcN-1-P) to produce N-acetylglucosamine-1-phosphate (GlcNAc-1-P), which is converted into UDP-GlcNAc by the transfer of uridine 5-monophosphate (from uridine 5-triphosphate), a reaction catalyzed by the N-terminal domain. The protein is Bifunctional protein GlmU of Stenotrophomonas maltophilia (strain K279a).